A 156-amino-acid polypeptide reads, in one-letter code: 6,7-dimethyl-8-ribityllumazine synthase (156 aa).

Residues phenylalanine 23, alanine 57 to glutamate 59, and alanine 81 to isoleucine 83 contribute to the 5-amino-6-(D-ribitylamino)uracil site. Glycine 86–threonine 87 is a (2S)-2-hydroxy-3-oxobutyl phosphate binding site. The active-site Proton donor is histidine 89. Phenylalanine 114 provides a ligand contact to 5-amino-6-(D-ribitylamino)uracil. Arginine 128 serves as a coordination point for (2S)-2-hydroxy-3-oxobutyl phosphate.

Belongs to the DMRL synthase family.

It catalyses the reaction (2S)-2-hydroxy-3-oxobutyl phosphate + 5-amino-6-(D-ribitylamino)uracil = 6,7-dimethyl-8-(1-D-ribityl)lumazine + phosphate + 2 H2O + H(+). The protein operates within cofactor biosynthesis; riboflavin biosynthesis; riboflavin from 2-hydroxy-3-oxobutyl phosphate and 5-amino-6-(D-ribitylamino)uracil: step 1/2. Catalyzes the formation of 6,7-dimethyl-8-ribityllumazine by condensation of 5-amino-6-(D-ribitylamino)uracil with 3,4-dihydroxy-2-butanone 4-phosphate. This is the penultimate step in the biosynthesis of riboflavin. The chain is 6,7-dimethyl-8-ribityllumazine synthase from Helicobacter pylori (strain ATCC 700392 / 26695) (Campylobacter pylori).